Reading from the N-terminus, the 336-residue chain is MAKVYYEKDVMVNVLKGKKVAIVGYGSQGHAHAQNLRDNNFDVVVGLRKGKSWEKAKEDGFSVYSVAEAAAMADVVMVLLPDELQPEVYQAEIESNLQSGNALVFAHGFNVHFNQVTPPEDVDVFLVAPKGPGHLVRRTFTEGGAVPALFAVYQDATGTATEKALSYADGIGATRAGVLETTFKEETETDLFGEQAVLCGGVTALVKAGFETLVDAGYQPELAYFECLHELKLIVDLMYEGGLENMRYSVSDTAQWGDFVSGPRVVTEHTKKAMGDVLKEIQDGTFAKGWIAEHQAGRPHFHAINAKENEHQIEVVGRQLREMMPFVKPKVKTGVK.

A KARI N-terminal Rossmann domain is found at Ala-2 to Thr-181. NADP(+)-binding positions include Tyr-25 to Gln-28, Arg-48, Ser-52, and Asp-82 to Gln-85. Residue His-107 is part of the active site. Gly-133 lines the NADP(+) pocket. The KARI C-terminal knotted domain occupies Thr-182–Val-327. Mg(2+)-binding residues include Asp-190, Glu-194, Glu-226, and Glu-230. Residue Ser-251 coordinates substrate.

Belongs to the ketol-acid reductoisomerase family. Requires Mg(2+) as cofactor.

The enzyme catalyses (2R)-2,3-dihydroxy-3-methylbutanoate + NADP(+) = (2S)-2-acetolactate + NADPH + H(+). It carries out the reaction (2R,3R)-2,3-dihydroxy-3-methylpentanoate + NADP(+) = (S)-2-ethyl-2-hydroxy-3-oxobutanoate + NADPH + H(+). Its pathway is amino-acid biosynthesis; L-isoleucine biosynthesis; L-isoleucine from 2-oxobutanoate: step 2/4. It functions in the pathway amino-acid biosynthesis; L-valine biosynthesis; L-valine from pyruvate: step 2/4. In terms of biological role, involved in the biosynthesis of branched-chain amino acids (BCAA). Catalyzes an alkyl-migration followed by a ketol-acid reduction of (S)-2-acetolactate (S2AL) to yield (R)-2,3-dihydroxy-isovalerate. In the isomerase reaction, S2AL is rearranged via a Mg-dependent methyl migration to produce 3-hydroxy-3-methyl-2-ketobutyrate (HMKB). In the reductase reaction, this 2-ketoacid undergoes a metal-dependent reduction by NADPH to yield (R)-2,3-dihydroxy-isovalerate. This chain is Ketol-acid reductoisomerase (NADP(+)), found in Bacillus cytotoxicus (strain DSM 22905 / CIP 110041 / 391-98 / NVH 391-98).